The following is an 836-amino-acid chain: Pentatricopeptide repeat-containing protein At2g39620 (836 aa).

PPR repeat units lie at residues 1-35 (MPINYTNLLLMLRECKNFRCLLQVHGSLIVSGLKP), 36-62 (HNQLINAYSLFQRQDLSRVIFDSVRDP), 63-98 (GVVLWNSMIRGYTRAGLHREALGFFGYMSEEKGIDP), 99-133 (DKYSFTFALKACAGSMDFKKGLRIHDLIAEMGLES), 134-164 (DVYIGTALVEMYCKARDLVSARQVFDKMHVK), 165-199 (DVVTWNTMVSGLAQNGCSSAALLLFHDMRSCCVDI), 200-230 (DHVSLYNLIPAVSKLEKSDVCRCLHGLVIKK), 233-263 (IFAFSSGLIDMYCNCADLYAAESVFEEVWRK), 264-298 (DESSWGTMMAAYAHNGFFEEVLELFDLMRNYDVRM), 299-333 (NKVAAASALQAAAYVGDLVKGIAIHDYAVQQGLIG), 334-364 (DVSVATSLMSMYSKCGELEIAEQLFINIEDR), 365-399 (DVVSWSAMIASYEQAGQHDEAISLFRDMMRIHIKP), 400-434 (NAVTLTSVLQGCAGVAASRLGKSIHCYAIKADIES), 435-465 (ELETATAVISMYAKCGRFSPALKAFERLPIK), 466-500 (DAVAFNALAQGYTQIGDANKAFDVYKNMKLHGVCP), 501-535 (DSRTMVGMLQTCAFCSDYARGSCVYGQIIKHGFDS), 536-566 (ECHVAHALINMFTKCDALAAAIVLFDKCGFE), 568-602 (STVSWNIMMNGYLLHGQAEEAVATFRQMKVEKFQP), 603-637 (NAVTFVNIVRAAAELSALRVGMSVHSSLIQCGFCS), 638-668 (QTPVGNSLVDMYAKCGMIESSEKCFIEISNK), 669-703 (YIVSWNTMLSAYAAHGLASCAVSLFLSMQENELKP), 704-734 (DSVSFLSVLSACRHAGLVEEGKRIFEEMGER), and 740-770 (EVEHYACMVDLLGKAGLFGEAVEMMRRMRVK). A type E motif; degenerate region spans residues 775–836 (VWGALLNSSR…KVPACSWIEV (62 aa)).

Belongs to the PPR family. PCMP-E subfamily.

The chain is Pentatricopeptide repeat-containing protein At2g39620 (PCMP-E33) from Arabidopsis thaliana (Mouse-ear cress).